The chain runs to 91 residues: Elongation factor 1-beta (91 aa).

In terms of assembly, homodimer.

In terms of biological role, promotes the exchange of GDP for GTP in EF-1-alpha/GDP, thus allowing the regeneration of EF-1-alpha/GTP that could then be used to form the ternary complex EF-1-alpha/GTP/AAtRNA. The polypeptide is Elongation factor 1-beta (ef1b) (Saccharolobus solfataricus (strain ATCC 35092 / DSM 1617 / JCM 11322 / P2) (Sulfolobus solfataricus)).